We begin with the raw amino-acid sequence, 190 residues long: Cytoglobin (190 aa).

The interval 1 to 21 (MEKVPGDMEIERRERSEELSE) is disordered. Residues 18–167 (ELSEAERKAV…IYSHVTAAYK (150 aa)) enclose the Globin domain. A disulfide bond links Cys-38 and Cys-83. 2 residues coordinate heme b: His-81 and His-113.

It belongs to the globin family. Monomeric. Homodimer; disulfide-linked in vitro. Also homooligomeric in vitro. The formation of an intramolecular disulfide bond between cysteines Cys-38 and Cys-83 specifically enhances the nitrite reductase activity. Expressed in brain and retina by non-neuronal cells (at protein level). This is the major globin expressed in vascular smooth muscle and is not present in the endothelium (at protein level).

It is found in the cytoplasm. Its subcellular location is the nucleus. It carries out the reaction Fe(II)-heme b-[protein] + nitric oxide + O2 = Fe(III)-heme b-[protein] + nitrate. The catalysed reaction is 2 superoxide + 2 H(+) = H2O2 + O2. The enzyme catalyses Fe(III)-heme b-[protein] + nitric oxide + H2O = Fe(II)-heme b-[protein] + nitrite + 2 H(+). It catalyses the reaction H2O2 + AH2 = A + 2 H2O. With respect to regulation, the nitric oxide dioxygenase activity is activated by a reducing system composed of cytochrome b5, its upstream reductase CYB5R3 and NADH. Probable multifunctional globin with a hexacoordinated heme iron required for the catalysis of various reactions depending on redox condition of the cell as well as oxygen availability. Has a nitric oxide dioxygenase (NOD) activity and is most probably involved in cell-mediated and oxygen-dependent nitric oxide consumption. By scavenging this second messenger may regulate several biological processes including endothelium-mediated vasodilation and vascular tone. Under normoxic conditions functions as a nitric oxide dioxygenase (NOD) but under hypoxic conditions the globin may switch its function to that of a nitrite (NO2) reductase (NiR), generating nitric oxide. Could also have peroxidase and superoxide dismutase activities, detoxifying reactive oxygen species and protecting cells against oxidative stress. Also binds dioxygen with low affinity and could function as an oxygen sensor but has probably no function as a respiratory oxygen carrier. This is Cytoglobin from Mus musculus (Mouse).